We begin with the raw amino-acid sequence, 896 residues long: Phycobiliprotein ApcE (896 aa).

Cys-190 is a (2R,3E)-phycocyanobilin binding site. PBS-linker domains follow at residues 247 to 427, 508 to 684, and 703 to 881; these read DIQG…FRKV, LGAK…QRVD, and EPEI…KQDK.

The protein belongs to the phycobilisome linker protein family. As to quaternary structure, heterodimer of ApcF (a variant beta-allophycocyanin). Phycobilisomes of this organism are composed of a two cylinder core, from which six rods radiate. The core is mainly composed of allophycocyanin alpha and beta chains and of minor components. In terms of processing, contains one covalently linked bilin chromophore. This protein autochromophorylates.

The protein localises to the cellular thylakoid membrane. Functionally, this protein is postulated to act both as terminal energy acceptor (by its phycobilin-like domains) and as a linker polypeptide (by its repeats and arms) that stabilizes the phycobilisome core architecture. Has intrinsic bilin lyase activity. This is Phycobiliprotein ApcE (apcE) from Synechocystis sp. (strain ATCC 27184 / PCC 6803 / Kazusa).